A 92-amino-acid chain; its full sequence is UPF0250 protein Smlt4048 (92 aa).

Belongs to the UPF0250 family.

This Stenotrophomonas maltophilia (strain K279a) protein is UPF0250 protein Smlt4048.